The following is a 309-amino-acid chain: Olfactory receptor 5AK2 (309 aa).

Topologically, residues 1 to 25 are extracellular; that stretch reads MTLGNSTEVTEFYLLGFGAQHEFWC. N5 carries an N-linked (GlcNAc...) asparagine glycan. The chain crosses the membrane as a helical span at residues 26 to 46; the sequence is ILFIVFLLIYVTSIMGNSGII. Residues 47–54 are Cytoplasmic-facing; that stretch reads LLINTDSR. Residues 55 to 75 traverse the membrane as a helical segment; it reads FQTLTYFFLQHLAFVDICYTS. Residues 76–99 are Extracellular-facing; that stretch reads AITPKMLQSFTEEKNLMLFQGCVI. Residues C97 and C189 are joined by a disulfide bond. The chain crosses the membrane as a helical span at residues 100 to 120; sequence QFLVYATFATSDCYLLAMMAV. The Cytoplasmic portion of the chain corresponds to 121–133; the sequence is DPYVAICKPLHYT. The chain crosses the membrane as a helical span at residues 134–154; the sequence is VIMSRTVCIRLVAGSYIMGSI. A glycan (N-linked (GlcNAc...) asparagine) is linked at N155. The Extracellular segment spans residues 155–196; sequence NASVQTGFTCSLSFCKSNSINHFFCDVPPILALSCSNVDINI. Residues 197–217 form a helical membrane-spanning segment; it reads MLLVVFVGSNLIFTGLVVIFS. Residues 218 to 237 lie on the Cytoplasmic side of the membrane; that stretch reads YIYIMATILKMSSSAGRKKS. A helical transmembrane segment spans residues 238 to 258; it reads FSTCASHLTAVTIFYGTLSYM. The Extracellular segment spans residues 259-271; that stretch reads YLQSHSNNSQENM. N265 is a glycosylation site (N-linked (GlcNAc...) asparagine). Residues 272–292 form a helical membrane-spanning segment; the sequence is KVAFIFYGTVIPMLNPLIYSL. The Cytoplasmic portion of the chain corresponds to 293–309; sequence RNKEVKEALKVIGKKLF.

It belongs to the G-protein coupled receptor 1 family.

Its subcellular location is the cell membrane. In terms of biological role, odorant receptor. This Homo sapiens (Human) protein is Olfactory receptor 5AK2 (OR5AK2).